Here is a 240-residue protein sequence, read N- to C-terminus: Large ribosomal subunit protein uL2 (240 aa).

Polar residues predominate over residues 1 to 11; that stretch reads MGKRLISQNRG. Disordered regions lie at residues 1 to 31 and 206 to 240; these read MGKRLISQNRGRGTPKYRSPSHKRKGAVKYR and GGGRHQHLGKPSSVSRHTSPGRKVGHIASRRTGRK. Basic residues-rich tracts occupy residues 13–28 and 224–240; these read GTPKYRSPSHKRKGAV and SPGRKVGHIASRRTGRK.

The protein belongs to the universal ribosomal protein uL2 family. In terms of assembly, part of the 50S ribosomal subunit. Forms a bridge to the 30S subunit in the 70S ribosome.

Its function is as follows. One of the primary rRNA binding proteins. Required for association of the 30S and 50S subunits to form the 70S ribosome, for tRNA binding and peptide bond formation. It has been suggested to have peptidyltransferase activity; this is somewhat controversial. Makes several contacts with the 16S rRNA in the 70S ribosome. The protein is Large ribosomal subunit protein uL2 of Methanococcus maripaludis (strain C6 / ATCC BAA-1332).